The chain runs to 404 residues: Probable tRNA sulfurtransferase (404 aa).

Residues 60–165 enclose the THUMP domain; sequence QPIVEALKLV…DEAAYISYEE (106 aa). Residues 183-184, 208-209, R265, G287, and Q296 contribute to the ATP site; these read ML and HF.

The protein belongs to the ThiI family.

Its subcellular location is the cytoplasm. The enzyme catalyses [ThiI sulfur-carrier protein]-S-sulfanyl-L-cysteine + a uridine in tRNA + 2 reduced [2Fe-2S]-[ferredoxin] + ATP + H(+) = [ThiI sulfur-carrier protein]-L-cysteine + a 4-thiouridine in tRNA + 2 oxidized [2Fe-2S]-[ferredoxin] + AMP + diphosphate. It catalyses the reaction [ThiS sulfur-carrier protein]-C-terminal Gly-Gly-AMP + S-sulfanyl-L-cysteinyl-[cysteine desulfurase] + AH2 = [ThiS sulfur-carrier protein]-C-terminal-Gly-aminoethanethioate + L-cysteinyl-[cysteine desulfurase] + A + AMP + 2 H(+). It functions in the pathway cofactor biosynthesis; thiamine diphosphate biosynthesis. Functionally, catalyzes the ATP-dependent transfer of a sulfur to tRNA to produce 4-thiouridine in position 8 of tRNAs, which functions as a near-UV photosensor. Also catalyzes the transfer of sulfur to the sulfur carrier protein ThiS, forming ThiS-thiocarboxylate. This is a step in the synthesis of thiazole, in the thiamine biosynthesis pathway. The sulfur is donated as persulfide by IscS. In Streptococcus pyogenes serotype M12 (strain MGAS2096), this protein is Probable tRNA sulfurtransferase.